The sequence spans 204 residues: Inner membrane-spanning protein YciB (204 aa).

6 helical membrane-spanning segments follow: residues 3–23 (AEIS…VFFF), 45–65 (IFIA…VSWI), 70–90 (LPIM…LTLW), 107–127 (LFGV…GYVF), 145–165 (WGVF…MFTT), and 168–188 (WVAF…MAQM).

It belongs to the YciB family.

Its subcellular location is the cell inner membrane. In terms of biological role, plays a role in cell envelope biogenesis, maintenance of cell envelope integrity and membrane homeostasis. This Agrobacterium fabrum (strain C58 / ATCC 33970) (Agrobacterium tumefaciens (strain C58)) protein is Inner membrane-spanning protein YciB.